Reading from the N-terminus, the 276-residue chain is Large ribosomal subunit protein uL2c (276 aa).

The tract at residues alanine 225–glutamate 276 is disordered.

The protein belongs to the universal ribosomal protein uL2 family. Part of the 50S ribosomal subunit.

It is found in the plastid. It localises to the chloroplast. This Pinus koraiensis (Korean pine) protein is Large ribosomal subunit protein uL2c (rpl2).